A 154-amino-acid chain; its full sequence is MADRDRSYRTFDQVVRGDRTNYQSGPSTTQVLTVLTLLPIGGTLLALAGLTLTGTVIGLCMATPLFVIFSPVLVPAAIAVFMAVAGFLSSGAFGLTGLSSLSYVFNRFRQATGTEQLDADRAKRGMQDMVGYVGQKTKETGQTIENKAHEGGRT.

Position 2 is an N-acetylalanine (Ala-2). The interval 2 to 33 (ADRDRSYRTFDQVVRGDRTNYQSGPSTTQVLT) is polar. 3 helical membrane passes run 31 to 51 (VLTVLTLLPIGGTLLALAGLT), 65 to 85 (LFVIFSPVLVPAAIAVFMAVA), and 86 to 106 (GFLSSGAFGLTGLSSLSYVFN). Positions 34 to 105 (VLTLLPIGGT…TGLSSLSYVF (72 aa)) are hydrophobic.

Belongs to the oleosin family.

It is found in the lipid droplet. Its subcellular location is the membrane. Functionally, may have a structural role to stabilize the lipid body during desiccation of the seed by preventing coalescence of the oil. Probably interacts with both lipid and phospholipid moieties of lipid bodies. May also provide recognition signals for specific lipase anchorage in lipolysis during seedling growth. In Gossypium hirsutum (Upland cotton), this protein is Oleosin 16.4 kDa (MATP7).